An 856-amino-acid polypeptide reads, in one-letter code: Rab effector MyRIP (856 aa).

One can recognise a RabBD domain in the interval 4–124 (KLDLSGLTDD…TQSLEWFYNN (121 aa)). Residues 63–105 (CCMRCCSPFTFLVNARRRCGECKFSVCKSCCSYQKHEKLWVCC) form an FYVE-type zinc finger. The segment at 143 to 560 (KKHRLESGAC…AQVSDNVSET (418 aa)) is myosin-binding. The segment at 193-209 (VALQVAEEAIEEAISKA) is PKA-binding. The segment at 232–248 (LAEELAGTILQRIIRKQ) is negative regulation of PKA-binding. Residues 251-287 (KADLHAEEEEPECTRPQSSGVKARGEGTAAPPGRHKA) are disordered. Ser-299 is modified (phosphoserine). Polar residues predominate over residues 302 to 311 (TEDTLKTSSA). 6 disordered regions span residues 302–323 (TEDT…DRAQ), 350–376 (QSPD…KPKS), 392–578 (YDEL…SAEE), 592–625 (SEKE…NNQG), 778–805 (RRDQ…APPV), and 826–845 (LLQG…TKDL). At Ser-351 the chain carries Phosphoserine. Acidic residues predominate over residues 395–405 (LGSDSEEDFDY). 2 stretches are compositionally biased toward low complexity: residues 427-437 (PAQAQSSGQGP) and 450-460 (SDSETSSTSSS). Residues 495–856 (FNPQAAGGET…EPVLESAVMY (362 aa)) form an actin-binding region. Composition is skewed to polar residues over residues 551–574 (AQVS…SSTD), 613–625 (QKGS…NNQG), 784–793 (RSQVQTIDTS), and 826–843 (LLQG…SNTK).

Binds MYO5A, MYO7A and F-actin. Binds RAB27A that has been activated by GTP-binding via its N-terminus. Interacts with PRKAR2A. Interacts with components of the exocyst complex, including EXOC3 and EXOC4.

Its subcellular location is the cytoplasm. It localises to the perinuclear region. The protein localises to the cytoplasmic vesicle. The protein resides in the secretory vesicle. It is found in the melanosome. In terms of biological role, rab effector protein involved in melanosome transport. Serves as link between melanosome-bound RAB27A and the motor proteins MYO5A and MYO7A. May link RAB27A-containing vesicles to actin filaments. Functions as a protein kinase A-anchoring protein (AKAP). May act as a scaffolding protein that links PKA to components of the exocytosis machinery, thus facilitating exocytosis, including insulin release. The polypeptide is Rab effector MyRIP (Myrip) (Rattus norvegicus (Rat)).